The chain runs to 285 residues: UPF0603 protein At1g54780, chloroplastic (285 aa).

Disordered stretches follow at residues 1-48 (METL…LSTR) and 228-251 (GQPDPGGPTVKDSKRESNFKTKEE). Over residues 22–40 (HQTKPTSHSLSLSKPTTFS) the composition is skewed to polar residues. Basic and acidic residues predominate over residues 238 to 251 (KDSKRESNFKTKEE). Residues 259–279 (FSLVVGGLLVIAFVVPMAQYF) form a helical membrane-spanning segment.

It belongs to the UPF0603 family.

Its subcellular location is the plastid. It localises to the chloroplast thylakoid membrane. In Arabidopsis thaliana (Mouse-ear cress), this protein is UPF0603 protein At1g54780, chloroplastic.